A 282-amino-acid polypeptide reads, in one-letter code: Pantothenate synthetase (282 aa).

ATP is bound at residue 30–37 (MGYLHEGH). Catalysis depends on His37, which acts as the Proton donor. Residue Gln61 coordinates (R)-pantoate. A beta-alanine-binding site is contributed by Gln61. 147 to 150 (GQKD) provides a ligand contact to ATP. Gln153 contributes to the (R)-pantoate binding site. ATP-binding positions include Val176 and 184–187 (MSSR).

The protein belongs to the pantothenate synthetase family. Homodimer.

It is found in the cytoplasm. The catalysed reaction is (R)-pantoate + beta-alanine + ATP = (R)-pantothenate + AMP + diphosphate + H(+). The protein operates within cofactor biosynthesis; (R)-pantothenate biosynthesis; (R)-pantothenate from (R)-pantoate and beta-alanine: step 1/1. Functionally, catalyzes the condensation of pantoate with beta-alanine in an ATP-dependent reaction via a pantoyl-adenylate intermediate. The polypeptide is Pantothenate synthetase (Pelotomaculum thermopropionicum (strain DSM 13744 / JCM 10971 / SI)).